A 325-amino-acid polypeptide reads, in one-letter code: Protein FAM50B (325 aa).

Residue Ala-2 is modified to N-acetylalanine. Disordered regions lie at residues 92 to 111 and 137 to 160; these read QHLE…EQRR and RRAG…DREE.

It belongs to the FAM50 family. As to expression, widely expressed. Mostly abundant in testis and adult and fetal brain.

This chain is Protein FAM50B (FAM50B), found in Homo sapiens (Human).